Here is a 144-residue protein sequence, read N- to C-terminus: Ribosome maturation factor RimP (144 aa).

This sequence belongs to the RimP family.

It localises to the cytoplasm. Its function is as follows. Required for maturation of 30S ribosomal subunits. This Azoarcus sp. (strain BH72) protein is Ribosome maturation factor RimP.